We begin with the raw amino-acid sequence, 192 residues long: Vascular endothelial growth factor A (192 aa).

A signal peptide spans 1 to 26 (MNFLLTWIHWGLAALLYFHNAKVLQA). 3 disulfides stabilise this stretch: Cys-52/Cys-94, Cys-83/Cys-128, and Cys-87/Cys-130. A glycan (N-linked (GlcNAc...) asparagine) is linked at Asn-101.

It belongs to the PDGF/VEGF growth factor family. As to quaternary structure, homodimer; disulfide-linked. Also found as heterodimer with PGF. Interacts with FLT1/VEGFR1 and KDR/VEGFR2 receptors, heparan sulfate and heparin. Expressed by the venom gland, and probably other tissues.

Its subcellular location is the secreted. Its function is as follows. Growth factor active in angiogenesis, vasculogenesis and endothelial cell growth. Induces endothelial cell proliferation, promotes cell migration, inhibits apoptosis and induces permeabilization of blood vessels. This is Vascular endothelial growth factor A from Agkistrodon piscivorus piscivorus (Eastern cottonmouth).